Consider the following 379-residue polypeptide: Probable pectin lyase A (379 aa).

The N-terminal stretch at 1-19 is a signal peptide; that stretch reads MKFALLSGVAAGLLPVVSA. 2 disulfides stabilise this stretch: Cys82–Cys101 and Cys91–Cys225. The active site involves Arg255. An intrachain disulfide couples Cys322 to Cys330.

Belongs to the polysaccharide lyase 1 family.

It is found in the secreted. The enzyme catalyses Eliminative cleavage of (1-&gt;4)-alpha-D-galacturonan methyl ester to give oligosaccharides with 4-deoxy-6-O-methyl-alpha-D-galact-4-enuronosyl groups at their non-reducing ends.. Pectinolytic enzymes consist of four classes of enzymes: pectin lyase, polygalacturonase, pectin methylesterase and rhamnogalacturonase. Among pectinolytic enzymes, pectin lyase is the most important in depolymerization of pectin, since it cleaves internal glycosidic bonds of highly methylated pectins. This Aspergillus oryzae (strain ATCC 42149 / RIB 40) (Yellow koji mold) protein is Probable pectin lyase A (pelA).